Consider the following 600-residue polypeptide: Methionine--tRNA ligase (600 aa).

Positions 12–22 (PYANGPRHIGH) match the 'HIGH' region motif. Residues Cys144, Cys147, Cys157, and Cys160 each contribute to the Zn(2+) site. The short motif at 351–355 (KFSSS) is the 'KMSKS' region element. Ser354 provides a ligand contact to ATP.

This sequence belongs to the class-I aminoacyl-tRNA synthetase family. MetG type 1 subfamily. In terms of assembly, monomer. Requires Zn(2+) as cofactor.

It is found in the cytoplasm. It carries out the reaction tRNA(Met) + L-methionine + ATP = L-methionyl-tRNA(Met) + AMP + diphosphate. Its function is as follows. Is required not only for elongation of protein synthesis but also for the initiation of all mRNA translation through initiator tRNA(fMet) aminoacylation. The sequence is that of Methionine--tRNA ligase from Chloroflexus aggregans (strain MD-66 / DSM 9485).